A 195-amino-acid chain; its full sequence is Flagellar transcriptional regulator FlhC (195 aa).

Residues cysteine 137, cysteine 140, cysteine 157, and cysteine 160 each contribute to the Zn(2+) site. The disordered stretch occupies residues 165–195; sequence RAGSARRKTTTRKAVAPTHKTTAASRKAVVA.

The protein belongs to the FlhC family. As to quaternary structure, heterohexamer composed of two FlhC and four FlhD subunits. Each FlhC binds a FlhD dimer, forming a heterotrimer, and a hexamer assembles by dimerization of two heterotrimers. The cofactor is Zn(2+).

Its subcellular location is the cytoplasm. Its function is as follows. Functions in complex with FlhD as a master transcriptional regulator that regulates transcription of several flagellar and non-flagellar operons by binding to their promoter region. Activates expression of class 2 flagellar genes, including fliA, which is a flagellum-specific sigma factor that turns on the class 3 genes. Also regulates genes whose products function in a variety of physiological pathways. The chain is Flagellar transcriptional regulator FlhC from Thauera aminoaromatica.